A 284-amino-acid chain; its full sequence is HTH-type transcriptional activator RhaR (284 aa).

Residues 181–279 (DMLMNALRAS…GVSPSAYRQR (99 aa)) enclose the HTH araC/xylS-type domain. 2 DNA-binding regions (H-T-H motif) span residues 198–219 (EAFCEQHHFSARSLRSRFKEQT) and 246–269 (IGDIAALCGFEDSNYFSVVFHQAF).

Binds DNA as a dimer.

It localises to the cytoplasm. Functionally, activates expression of the rhaSR operon in response to L-rhamnose. The protein is HTH-type transcriptional activator RhaR of Pectobacterium carotovorum subsp. carotovorum (strain PC1).